The chain runs to 83 residues: UPF0297 protein Moth_1643 (83 aa).

The protein belongs to the UPF0297 family.

This Moorella thermoacetica (strain ATCC 39073 / JCM 9320) protein is UPF0297 protein Moth_1643.